Consider the following 244-residue polypeptide: Mitochondrial import inner membrane translocase subunit Tim21 (244 aa).

The N-terminal 18 residues, 1–18 (MICAFLRVVQHAEKLHGS), are a transit peptide targeting the mitochondrion. Residues 65–96 (TQGPDPRKAKEDSTKQVSIRRNQREETGVSMS) form a disordered region. Basic and acidic residues predominate over residues 69–78 (DPRKAKEDST). Residues 107-127 (SYLIVVLFGVGLTGGLLYAIF) form a helical membrane-spanning segment.

This sequence belongs to the TIM21 family. Component of the TIM23 complex. Component of the MITRAC (mitochondrial translation regulation assembly intermediate of cytochrome c oxidase complex) complex, the core components of this complex being COA3/MITRAC12 and COX14. Interacts with COA3 and MT-CO1/COX1.

Its subcellular location is the mitochondrion membrane. Participates in the translocation of transit peptide-containing proteins across the mitochondrial inner membrane. Also required for assembly of mitochondrial respiratory chain complex I and complex IV as component of the MITRAC (mitochondrial translation regulation assembly intermediate of cytochrome c oxidase complex) complex. Probably shuttles between the presequence translocase and respiratory-chain assembly intermediates in a process that promotes incorporation of early nuclear-encoded subunits into these complexes. The sequence is that of Mitochondrial import inner membrane translocase subunit Tim21 (Timm21) from Mus musculus (Mouse).